The following is a 1456-amino-acid chain: CLIP-associating protein 1-B (1456 aa).

3 HEAT repeats span residues 68 to 87, 88 to 124, and 163 to 200; these read LLGMDILSALVTRLQDRFRT, QIGTVLPSLMDRLGDAKDSVRDQDQNLLIKIMEQASN, and LTLSKIVPHICNLLGDPNSQVRDAAINCLVEIYRHVGE. A disordered region spans residues 237–296; it reads TDKNFDDEDSVDGNRPSSASSSASSKAPQTARRGVSLGTGRRPGTSSAAPKTGGTAKEGA. The segment covering 284 to 296 has biased composition (low complexity); it reads AAPKTGGTAKEGA. The HEAT 4 repeat unit spans residues 442-479; it reads THVPRLIPIITSNCTSKSVAVRRRCYEFLDLLLQEWQT. Disordered regions lie at residues 547-728 and 776-796; these read SIVS…DRFG and GMYSDDDANSDASSACSERSY. A compositionally biased stretch (low complexity) spans 550–569; it reads SLPQSDRSSSSSQESLNRPL. Polar residues predominate over residues 573 to 594; that stretch reads RSPTGSTVSRATSKSTTGSLQR. 3 stretches are compositionally biased toward low complexity: residues 603-618, 642-656, and 665-679; these read AAATSKTKAASGASTA, QSSGSTTSTASTPAD, and VVSQSQPGSRSSSPG. Positions 711–721 are enriched in polar residues; that stretch reads QGCSRETSPSR. A compositionally biased stretch (low complexity) spans 785–796; it reads SDASSACSERSY. An HEAT 5 repeat occupies 930 to 967; sequence QQFNILMRFIVDQTQTPNLKVKVAILKYIESLARQMDP. Disordered stretches follow at residues 1037–1080 and 1121–1147; these read LKNS…GLSP and VRRDGKKESEMGSCDAGMASPASDLRG. Positions 1038-1050 are enriched in low complexity; sequence KNSSNSSMGSPSN. Polar residues predominate over residues 1062–1074; the sequence is SRASPLTSPTNCS. Residues 1121–1130 are compositionally biased toward basic and acidic residues; it reads VRRDGKKESE. 2 HEAT repeats span residues 1260–1297 and 1378–1415; these read EHFKTILLLLLETLGDKDHAIRALALRVLREILRNQPA and QILPDIIPGLLQGYDNTESSVRKASVFCLVAVYSVIGE.

Belongs to the CLASP family. As to quaternary structure, interacts (via C-terminus) with clip1/clip-170, and cenpe.

It localises to the cytoplasm. It is found in the cytoskeleton. The protein localises to the microtubule organizing center. The protein resides in the centrosome. Its subcellular location is the chromosome. It localises to the centromere. It is found in the kinetochore. The protein localises to the spindle. The protein resides in the golgi apparatus. Its subcellular location is the trans-Golgi network. Functionally, microtubule plus-end tracking protein that promotes the stabilization of dynamic microtubules during anaphase. Plays a crucial role in chromatin-induced microtubule formation. May also act at microtubule minus ends. May be involved in the nucleation of noncentrosomal microtubules originating from the trans-Golgi network (TGN). The protein is CLIP-associating protein 1-B of Xenopus laevis (African clawed frog).